The primary structure comprises 340 residues: DNA-directed RNA polymerase subunit alpha (340 aa).

An alpha N-terminal domain (alpha-NTD) region spans residues 1-238; it reads MADTFVAKNW…EQLTVFVNFD (238 aa). The tract at residues 253-340 is alpha C-terminal domain (alpha-CTD); sequence AKLNENLFRS…QAPAPAQPKA (88 aa).

Belongs to the RNA polymerase alpha chain family. As to quaternary structure, homodimer. The RNAP catalytic core consists of 2 alpha, 1 beta, 1 beta' and 1 omega subunit. When a sigma factor is associated with the core the holoenzyme is formed, which can initiate transcription.

The enzyme catalyses RNA(n) + a ribonucleoside 5'-triphosphate = RNA(n+1) + diphosphate. Its function is as follows. DNA-dependent RNA polymerase catalyzes the transcription of DNA into RNA using the four ribonucleoside triphosphates as substrates. The polypeptide is DNA-directed RNA polymerase subunit alpha (Myxococcus xanthus (strain DK1622)).